The primary structure comprises 695 residues: GRB2-associated-binding protein 1 (695 aa).

Ser-2 is subject to N-acetylserine. The 112-residue stretch at 5–116 (EVVCSGWLRK…WVRCICDICG (112 aa)) folds into the PH domain. Positions 204–229 (AKPTFSETDCNDNVPSHQTPASSQSK) are disordered. Residues 206–229 (PTFSETDCNDNVPSHQTPASSQSK) are compositionally biased toward polar residues. Ser-251, Ser-253, Ser-266, and Ser-304 each carry phosphoserine. A disordered region spans residues 306–387 (SYDIPPTPGN…PAGMTPSRSN (82 aa)). Polar residues predominate over residues 314-334 (GNTYQIPRTFPESTLGQSSKL). A Phosphothreonine modification is found at Thr-388. Phosphoserine is present on residues Ser-403 and Ser-455. The tract at residues 453–659 (PNSPPRQHSG…GSSMADERVD (207 aa)) is disordered. Composition is skewed to polar residues over residues 457 to 466 (PRQHSGSFTE) and 605 to 617 (FASN…SSPM). A Phosphotyrosine modification is found at Tyr-628. Phosphothreonine is present on Thr-639. Ser-652 bears the Phosphoserine mark. Tyr-660 carries the phosphotyrosine modification. Residues 671–695 (LKSTREAWTDGRQSTESETPTKNVK) are disordered. Over residues 673 to 685 (STREAWTDGRQST) the composition is skewed to basic and acidic residues. Ser-684 bears the Phosphoserine mark. Over residues 686 to 695 (ESETPTKNVK) the composition is skewed to polar residues.

It belongs to the GAB family. In terms of assembly, identified in a complex containing FRS2, GRB2, GAB1, PIK3R1 and SOS1. Forms a tripartite complex containing GAB1, METTL13 and SPRY2. Within the complex interacts with METTL13. Interacts with GRB2 and with other SH2-containing proteins. Interacts with phosphorylated LAT2. Interacts with PTPRJ. Interacts (phosphorylated) with PTPN11. Interacts with HCK. Phosphorylated on tyrosine residue(s) by the epidermal growth factor receptor (EGFR) and the insulin receptor (INSR). Tyrosine phosphorylation of GAB1 mediates interaction with several proteins that contain SH2 domains. Phosphorylated on tyrosine residues by HCK upon IL6 signaling. Phosphorylated in response to FGFR1 activation. As to expression, expressed in the inner ear (at protein level). Expression is detected in the cochlear duct, spiral limbus region, efferent and afferent nerves, and in spiral ganglion neurons (at protein level).

In terms of biological role, adapter protein that plays a role in intracellular signaling cascades triggered by activated receptor-type kinases. Plays a role in FGFR1 signaling. Probably involved in signaling by the epidermal growth factor receptor (EGFR) and the insulin receptor (INSR). Involved in the MET/HGF-signaling pathway. In Mus musculus (Mouse), this protein is GRB2-associated-binding protein 1 (Gab1).